An 87-amino-acid polypeptide reads, in one-letter code: UPF0473 protein PTH_1066 (87 aa).

This sequence belongs to the UPF0473 family.

This chain is UPF0473 protein PTH_1066, found in Pelotomaculum thermopropionicum (strain DSM 13744 / JCM 10971 / SI).